The chain runs to 463 residues: Adenosylhomocysteinase (463 aa).

Substrate contacts are provided by threonine 54, aspartate 128, and glutamate 189. Residue 190–192 coordinates NAD(+); the sequence is TTT. 2 residues coordinate substrate: lysine 219 and aspartate 223. Residues asparagine 224, 253 to 258, glutamate 276, asparagine 311, 332 to 334, and asparagine 377 each bind NAD(+); these read GYGDVG and IGH.

This sequence belongs to the adenosylhomocysteinase family. It depends on NAD(+) as a cofactor.

The protein resides in the cytoplasm. The catalysed reaction is S-adenosyl-L-homocysteine + H2O = L-homocysteine + adenosine. Its pathway is amino-acid biosynthesis; L-homocysteine biosynthesis; L-homocysteine from S-adenosyl-L-homocysteine: step 1/1. In terms of biological role, may play a key role in the regulation of the intracellular concentration of adenosylhomocysteine. In Cereibacter sphaeroides (Rhodobacter sphaeroides), this protein is Adenosylhomocysteinase.